The primary structure comprises 507 residues: Monoogygenase CPUR_05431 (507 aa).

The protein belongs to the PheA/TfdB FAD monooxygenase family. It depends on FAD as a cofactor.

It participates in pigment biosynthesis. In terms of biological role, monoogygenase; part of the ergochrome gene cluster responsible for the typical purple-black color of the ergot sclerotia. The ergochrome gene cluster produces several ergot pigments including the yellow ergochrome secalonic acid and its derivatives, as well as the red anthraquinones endocrocin and clavorubin. The pathway begins with the synthesis of atrochrysone thioester by the polyketide synthase (PKS) CPUR_05437. The atrochrysone carboxyl ACP thioesterase CPUR_05436 then breaks the thioester bond and releases the atrochrysone carboxylic acid from CPUR_05437. The atrochrysone carboxylic acid is then converted to atrochrysone which is further transformed into emodin anthrone. The next step is performed by the anthrone oxygenase CPUR_05434 that catalyzes the oxidation of emodinanthrone to emodin. Emodin is further modified to yield monodictyphenone via several steps involving CPUR_05427, CPUR_05428, CPUR_05429 and CPUR_05430. The short chain dehydrogenase/reductase CPUR_05418 then catalyzes the C-5 ketoreduction to give the xanthone skeleton of the monomeric units. Ergochromes formation requires further dimerization steps of different xanthone units, probably catalyzed by the cytochrome P450 monooxygenase CPUR_05419. CPUR_05425, CPUR_05426 and CPUR_05431 are unique to Claviceps, thus it is likely that they are involved in further modification of xanthone units or in their dimerization. The yellow ergochromes and the red anthraquinone pigments endocrocin and clavorubin are products from the same PKS derived precursors and the latter are likely shunt products in the pathway of xanthone biosynthesis. It is proposed that atrochrysone carboxylic acid released from the PKS CPUR_05437 can also be converted to endocrocin anthrone which is further oxidized into endocrocin by CPUR_05435. Endocrocin could be then modified to clavorubin, possibly by CPUR_05423 and CPUR_05431. Clavorubin is the principal anthraquinone metabolite produced by the cluster with a much higher yield compared to endocrocin. This Claviceps purpurea (strain 20.1) (Ergot fungus) protein is Monoogygenase CPUR_05431.